The sequence spans 128 residues: MAYRKLGRTSSQRKAMLRDLTTDLLINESIVTTEARAKEIRKTVEKMITLGKRGDLHARRQAAAYVRNEIASESYDEATDKYTSTTALQKLFSEIAPRYAERNGGYTRILKTEPRRGDAAPMAIIELV.

This sequence belongs to the bacterial ribosomal protein bL17 family. Part of the 50S ribosomal subunit. Contacts protein L32.

The polypeptide is Large ribosomal subunit protein bL17 (Streptococcus equi subsp. zooepidemicus (strain H70)).